Reading from the N-terminus, the 295-residue chain is ATP synthase subunit a (295 aa).

7 consecutive transmembrane segments (helical) span residues 41 to 61 (KWSA…WLGF), 101 to 121 (YLTI…IPVA), 129 to 149 (IALP…VGIR), 161 to 181 (LVPA…IEFV), 191 to 211 (LAIR…VFAL), 222 to 242 (FVFG…ELMI), and 244 to 264 (VLQA…AISS).

It belongs to the ATPase A chain family. In terms of assembly, F-type ATPases have 2 components, CF(1) - the catalytic core - and CF(0) - the membrane proton channel. CF(1) has five subunits: alpha(3), beta(3), gamma(1), delta(1), epsilon(1). CF(0) has three main subunits: a(1), b(2) and c(9-12). The alpha and beta chains form an alternating ring which encloses part of the gamma chain. CF(1) is attached to CF(0) by a central stalk formed by the gamma and epsilon chains, while a peripheral stalk is formed by the delta and b chains.

Its subcellular location is the cell membrane. Its function is as follows. Key component of the proton channel; it plays a direct role in the translocation of protons across the membrane. The protein is ATP synthase subunit a of Parafrankia sp. (strain EAN1pec).